Consider the following 150-residue polypeptide: Large ribosomal subunit protein bL9 (150 aa).

The protein belongs to the bacterial ribosomal protein bL9 family.

Binds to the 23S rRNA. This Shewanella frigidimarina (strain NCIMB 400) protein is Large ribosomal subunit protein bL9.